The following is a 349-amino-acid chain: Shematrin-like protein 1 (349 aa).

Positions 1–16 (MLKLVCAVFLIATVSA) are cleaved as a signal peptide.

In terms of tissue distribution, prismatic layer of shell (at protein level).

It localises to the secreted. This chain is Shematrin-like protein 1, found in Margaritifera margaritifera (Freshwater pearl mussel).